A 430-amino-acid chain; its full sequence is tRNA(Ile)-lysidine synthase (430 aa).

Residue 24–29 (SGGLDS) participates in ATP binding.

This sequence belongs to the tRNA(Ile)-lysidine synthase family.

It is found in the cytoplasm. The enzyme catalyses cytidine(34) in tRNA(Ile2) + L-lysine + ATP = lysidine(34) in tRNA(Ile2) + AMP + diphosphate + H(+). In terms of biological role, ligates lysine onto the cytidine present at position 34 of the AUA codon-specific tRNA(Ile) that contains the anticodon CAU, in an ATP-dependent manner. Cytidine is converted to lysidine, thus changing the amino acid specificity of the tRNA from methionine to isoleucine. The sequence is that of tRNA(Ile)-lysidine synthase from Haemophilus influenzae (strain PittEE).